A 273-amino-acid chain; its full sequence is Cell division protein FtsQ (273 aa).

Topologically, residues 1-10 (MWNDARTINL) are cytoplasmic. The helical transmembrane segment at 11–31 (IANTLAVLAVAAMLLAGVAWV) threads the bilayer. The Periplasmic portion of the chain corresponds to 32–273 (AQRPYFTLAA…HSKSKPAKKR (242 aa)). The region spanning 37-110 (FTLAAIEIES…NTLRVRVEEQ (74 aa)) is the POTRA domain.

It belongs to the FtsQ/DivIB family. FtsQ subfamily. Part of a complex composed of FtsB, FtsL and FtsQ.

The protein localises to the cell inner membrane. In terms of biological role, essential cell division protein. May link together the upstream cell division proteins, which are predominantly cytoplasmic, with the downstream cell division proteins, which are predominantly periplasmic. May control correct divisome assembly. The protein is Cell division protein FtsQ of Bordetella pertussis (strain Tohama I / ATCC BAA-589 / NCTC 13251).